Reading from the N-terminus, the 329-residue chain is Sialic acid-binding periplasmic protein SiaP (329 aa).

The signal sequence occupies residues 1-23 (MMKLTKLFLATAISLGVSSAVLA). Residues asparagine 33, aspartate 72, glutamate 90, arginine 150, arginine 170, and asparagine 210 each contribute to the N-acetyl-beta-neuraminate site.

This sequence belongs to the bacterial solute-binding protein 7 family. The complex comprises the extracytoplasmic solute receptor protein SiaP, and the fused transmembrane protein SiaT.

Its subcellular location is the periplasm. In terms of biological role, part of the tripartite ATP-independent periplasmic (TRAP) transport system SiaPT involved in the uptake of sialic acid (N-acetyl-beta-neuraminate). This protein specifically binds sialic acid with high affinity. N-Acetylneuraminate (sialic acid) can then be incorporated into the lipooligosaccharides (LOS) as a terminal non-reducing sugar, protecting the bacterium from complement-mediated killing by normal human serum. In Haemophilus influenzae (strain ATCC 51907 / DSM 11121 / KW20 / Rd), this protein is Sialic acid-binding periplasmic protein SiaP (siaP).